Reading from the N-terminus, the 238-residue chain is MASNWRASASWYSHPVYARYWQHYHHAMLWMQGHQNAYRKFRDSYFTSPWLFPHGALPWNSPAYEAGHPWDSQGQHMAQQESPYRVSHPKSPGQPLRNSSRTQASTRGNEARCEEEELESDSDDEVECDLSNMEITEELRQYFAQTERHREERRRQQQLDAERLNDYVNADHGLYFNHRRSLEPPSEKPWERRQAEMKRLYGNSAPKILAMETAVQLSFDKHCDRKQPKYWPVIPLKF.

Residues 66 to 127 (AGHPWDSQGQ…LESDSDDEVE (62 aa)) are disordered. Composition is skewed to polar residues over residues 72–82 (SQGQHMAQQES) and 96–108 (LRNSSRTQASTRG). A compositionally biased stretch (acidic residues) spans 113–127 (CEEEELESDSDDEVE). Phosphoserine is present on serine 122. The stretch at 131–164 (SNMEITEELRQYFAQTERHREERRRQQQLDAERL) forms a coiled coil.

As to quaternary structure, part of the core SMN complex that contains SMN1, GEMIN2/SIP1, DDX20/GEMIN3, GEMIN4, GEMIN5, GEMIN6, GEMIN7, GEMIN8 and STRAP/UNRIP. Part of the SMN-Sm complex that contains SMN1, GEMIN2/SIP1, DDX20/GEMIN3, GEMIN4, GEMIN5, GEMIN6, GEMIN7, GEMIN8, STRAP/UNRIP and the Sm proteins SNRPB, SNRPD1, SNRPD2, SNRPD3, SNRPE, SNRPF and SNRPG. Interacts with GEMIN6; the interaction is direct. Interacts with GEMIN7; the interaction is direct. Interacts with SMN1; the interaction is direct. Interacts with GEMIN4; the interaction is direct. Widely expressed in embryonic tissues (at protein level).

The protein resides in the nucleus. It localises to the gem. Its subcellular location is the cytoplasm. Functionally, the SMN complex catalyzes the assembly of small nuclear ribonucleoproteins (snRNPs), the building blocks of the spliceosome, and thereby plays an important role in the splicing of cellular pre-mRNAs. Most spliceosomal snRNPs contain a common set of Sm proteins SNRPB, SNRPD1, SNRPD2, SNRPD3, SNRPE, SNRPF and SNRPG that assemble in a heptameric protein ring on the Sm site of the small nuclear RNA to form the core snRNP (Sm core). In the cytosol, the Sm proteins SNRPD1, SNRPD2, SNRPE, SNRPF and SNRPG are trapped in an inactive 6S pICln-Sm complex by the chaperone CLNS1A that controls the assembly of the core snRNP. To assemble core snRNPs, the SMN complex accepts the trapped 5Sm proteins from CLNS1A forming an intermediate. Binding of snRNA inside 5Sm triggers eviction of the SMN complex, thereby allowing binding of SNRPD3 and SNRPB to complete assembly of the core snRNP. The protein is Gem-associated protein 8 (Gemin8) of Mus musculus (Mouse).